We begin with the raw amino-acid sequence, 107 residues long: Ig kappa chain V-VI region SAPC 10 (107 aa).

A framework-1 region spans residues 1 to 23 (EIVLTQSPAITAASLGQKVTITC). Cysteine 23 and cysteine 87 are joined by a disulfide. The interval 24-33 (SASSSVSYMH) is complementarity-determining-1. The tract at residues 34–48 (WYQQKSGTSPKPWIY) is framework-2. The interval 49-55 (EISKLAS) is complementarity-determining-2. Residues 56–87 (GVPARFSGSGSGTSYSLTISSMEAEDAAIYYC) form a framework-3 region. The segment at 88–96 (QQWNYPLIT) is complementarity-determining-3. Residues 97 to 106 (FGGGTKLEIK) are framework-4.

In Mus musculus (Mouse), this protein is Ig kappa chain V-VI region SAPC 10.